Reading from the N-terminus, the 398-residue chain is Odorant receptor 59b (398 aa).

The Cytoplasmic segment spans residues 1–46; it reads MAVFKLIKPAPLTEKVQSRQGNIYLYRAMWLIGWIPPKEGVLRYVY. The chain crosses the membrane as a helical span at residues 47 to 67; it reads LFWTCVPFAFGVFYLPVGFII. Residues 68-84 lie on the Extracellular side of the membrane; it reads SYVQEFKNFTPGEFLTS. The helical transmembrane segment at 85–105 threads the bilayer; the sequence is LQVCINVYGASVKSTITYLFL. Over 106–141 the chain is Cytoplasmic; the sequence is WRLRKTEILLDSLDKRLANDSDRERIHNMVARCNYA. The helical transmembrane segment at 142–162 threads the bilayer; it reads FLIYSFIYCGYAGSTFLSYAL. The Extracellular segment spans residues 163–179; sequence SGRPPWSVYNPFIDWRD. Residues 180–200 form a helical membrane-spanning segment; the sequence is GMGSLWIQAIFEYITMSFAVL. Residues 201-269 lie on the Cytoplasmic side of the membrane; sequence QDQLSDTYPL…DMIRPMISRT (69 aa). Residues 270-290 form a helical membrane-spanning segment; sequence IFVQFALIGSVLGLTLVNVFF. At 291 to 293 the chain is on the extracellular side; sequence FSN. A helical membrane pass occupies residues 294 to 314; that stretch reads FWKGVASLLFVITILLQTFPF. The Cytoplasmic segment spans residues 315-348; the sequence is CYTCNMLIDDAQDLSNEIFQSNWVDAEPRYKATL. The helical transmembrane segment at 349-369 threads the bilayer; sequence VLFMHHVQQPIIFIAGGIFPI. Topologically, residues 370–398 are extracellular; the sequence is SMNSNITVAKFAFSIITIVRQMNLAEQFQ. Asn-374 is a glycosylation site (N-linked (GlcNAc...) asparagine).

It belongs to the insect chemoreceptor superfamily. Heteromeric odorant receptor channel (TC 1.A.69) family. Or2a subfamily. In terms of assembly, interacts with Orco. Complexes exist early in the endomembrane system in olfactory sensory neurons (OSNs), coupling these complexes to the conserved ciliary trafficking pathway. As to expression, expressed in olfactory sensory neurons in the antenna.

It is found in the cell membrane. Odorant receptor which mediates acceptance or avoidance behavior, depending on its substrates. The odorant receptor repertoire encodes a large collection of odor stimuli that vary widely in identity, intensity, and duration. Forms a complex with Orco to form odorant-sensing units, providing sensitive and prolonged odorant signaling and calcium permeability. Also plays a role in the response to N,N-Diethyl-meta-toluamide (DEET), the most widely used insect repellent worldwide. The chain is Odorant receptor 59b (Or59b) from Drosophila melanogaster (Fruit fly).